The following is a 162-amino-acid chain: uncharacterized protein (162 aa).

It belongs to the A.longa ORF167/ORF288 family.

Its subcellular location is the plastid. This is an uncharacterized protein from Euglena longa (Euglenophycean alga).